The following is a 99-amino-acid chain: Protein dpy-30 homolog (99 aa).

M1 carries the post-translational modification N-acetylmethionine. The segment at 1-26 (MESEQMLEGQTQVAENPHSEYGLTDS) is disordered. Residue S19 is modified to Phosphoserine. K35 carries the N6-acetyllysine; alternate modification. K35 is covalently cross-linked (Glycyl lysine isopeptide (Lys-Gly) (interchain with G-Cter in SUMO2); alternate).

This sequence belongs to the dpy-30 family. As to quaternary structure, homodimer. Core component of several methyltransferase-containing complexes including MLL1/MLL, MLL2/3 (also named ASCOM complex) and MLL4/WBP7. Each complex is at least composed of ASH2L, RBBP5, WDR5, DPY30, one or more specific histone methyltransferases (KMT2A/MLL1, KMT2D/MLL2, KMT2C/MLL3 and KMT2B/MLL4), and the facultative components MEN1, HCFC1, HCFC2, NCOA6, KDM6A, PAXIP1/PTIP, PAGR1 and alpha- and beta-tubulin PAXIP1/PTIP, PAGR1 and alpha- and beta-tubulin. Interacts with ASH2L. The interaction with ASH2L is direct. Interacts with ARFGEF1. Component of the SET1 complex, at least composed of the catalytic subunit (SETD1A or SETD1B), WDR5, WDR82, RBBP5, ASH2L/ASH2, CXXC1/CFP1, HCFC1 and DPY30.

The protein resides in the nucleus. It is found in the golgi apparatus. It localises to the trans-Golgi network. As part of the MLL1/MLL complex, involved in the methylation of histone H3 at 'Lys-4', particularly trimethylation. Histone H3 'Lys-4' methylation represents a specific tag for epigenetic transcriptional activation. May play some role in histone H3 acetylation. In embryonic stem (ES) cells, plays a crucial role in the differentiation potential, particularly along the neural lineage, regulating gene induction and histone H3 'Lys-4' methylation at key developmental loci, including that mediated by retinoic acid. Does not affect ES cell self-renewal. May also play an indirect or direct role in endosomal transport. This chain is Protein dpy-30 homolog (Dpy30), found in Mus musculus (Mouse).